The primary structure comprises 90 residues: Neuropeptide-like 3 (90 aa).

Positions 1-16 are cleaved as a signal peptide; it reads MFKLCVFVALLSLAAA. 2 consecutive propeptides follow at residues 17 to 54 and 67 to 79; these read APAP…LAPQ and AITQ…LLIK. Isoleucine amide is present on I89.

It localises to the secreted. This Drosophila melanogaster (Fruit fly) protein is Neuropeptide-like 3 (Nplp3).